The chain runs to 721 residues: Catalase-peroxidase 1 (721 aa).

The tryptophyl-tyrosyl-methioninium (Trp-Tyr) (with M-252) cross-link spans 98-226; that stretch reads WHAAGTYRIA…LAAVMMGLIY (129 aa). The Proton acceptor role is filled by H99. Residues 226–252 constitute a cross-link (tryptophyl-tyrosyl-methioninium (Tyr-Met) (with W-98)); it reads YVNPEGVDGQPDPLKTAHDVRVTFARM. Residue H267 participates in heme b binding.

The protein belongs to the peroxidase family. Peroxidase/catalase subfamily. In terms of assembly, homodimer or homotetramer. Heme b is required as a cofactor. In terms of processing, formation of the three residue Trp-Tyr-Met cross-link is important for the catalase, but not the peroxidase activity of the enzyme.

It carries out the reaction H2O2 + AH2 = A + 2 H2O. The enzyme catalyses 2 H2O2 = O2 + 2 H2O. Its function is as follows. Bifunctional enzyme with both catalase and broad-spectrum peroxidase activity. This chain is Catalase-peroxidase 1, found in Vibrio parahaemolyticus serotype O3:K6 (strain RIMD 2210633).